Here is a 230-residue protein sequence, read N- to C-terminus: Chalcone--flavanone isomerase (230 aa).

Residues Thr52, Asn117, and Ser194 each coordinate substrate.

The protein belongs to the chalcone isomerase family.

The enzyme catalyses a chalcone = a flavanone.. The protein operates within secondary metabolite biosynthesis; flavonoid biosynthesis. In terms of biological role, catalyzes the intramolecular cyclization of bicyclic chalcones into tricyclic (S)-flavanones. Responsible for the isomerization of 4,2',4',6'-tetrahydroxychalcone (also termed chalcone) into naringenin. This is Chalcone--flavanone isomerase (CHI) from Camellia sinensis (Tea plant).